Reading from the N-terminus, the 518-residue chain is Putative ribose/galactose/methyl galactoside import ATP-binding protein (518 aa).

Residues 1–22 (MSIAVLDRPMSRQDTPSASSVP) form a disordered region. The segment covering 12 to 22 (RQDTPSASSVP) has biased composition (polar residues). 2 ABC transporter domains span residues 29–265 (LEVR…VGRE) and 275–515 (VPIG…VMEL). 61-68 (GENGAGKS) contributes to the ATP binding site.

It belongs to the ABC transporter superfamily. Carbohydrate importer 2 (CUT2) (TC 3.A.1.2) family.

It localises to the cell inner membrane. The catalysed reaction is D-ribose(out) + ATP + H2O = D-ribose(in) + ADP + phosphate + H(+). It carries out the reaction D-galactose(out) + ATP + H2O = D-galactose(in) + ADP + phosphate + H(+). Its function is as follows. Part of an ABC transporter complex involved in carbohydrate import. Could be involved in ribose, galactose and/or methyl galactoside import. Responsible for energy coupling to the transport system. The sequence is that of Putative ribose/galactose/methyl galactoside import ATP-binding protein from Ralstonia nicotianae (strain ATCC BAA-1114 / GMI1000) (Ralstonia solanacearum).